Consider the following 191-residue polypeptide: Adenylate kinase (191 aa).

12 to 17 (GSGKTT) contacts ATP. The segment at 34-63 (STGDLLRAESAKKTERGLLIEKFTSQGELV) is NMP. Residues T35, R40, 61-63 (ELV), 88-91 (GYPR), and Q95 contribute to the AMP site. An LID region spans residues 130–136 (GRSRGAD). R131 lines the ATP pocket. AMP is bound by residues R133 and R145. ATP is bound at residue R173.

This sequence belongs to the adenylate kinase family. Monomer.

The protein resides in the cytoplasm. The catalysed reaction is AMP + ATP = 2 ADP. The protein operates within purine metabolism; AMP biosynthesis via salvage pathway; AMP from ADP: step 1/1. In terms of biological role, catalyzes the reversible transfer of the terminal phosphate group between ATP and AMP. Plays an important role in cellular energy homeostasis and in adenine nucleotide metabolism. The chain is Adenylate kinase from Helicobacter pylori (strain HPAG1).